The primary structure comprises 70 residues: Myotoxin (70 aa).

The first 22 residues, 1 to 22, serve as a signal peptide directing secretion; it reads MKILYLLFAFLFLAFLSEPGNA. 3 cysteine pairs are disulfide-bonded: Cys26/Cys58, Cys33/Cys52, and Cys40/Cys59.

It belongs to the crotamine-myotoxin family. As to quaternary structure, monomer. Expressed by the venom gland.

The protein resides in the secreted. Its function is as follows. Cationic peptide that possesses multiple functions. It acts as a cell-penetrating peptide (CPP), and as a potent voltage-gated potassium channel (Kv) inhibitor. It exhibits antimicrobial activities, hind limb paralysis, and severe muscle necrosis by a non-enzymatic mechanism. In Crotalus adamanteus (Eastern diamondback rattlesnake), this protein is Myotoxin.